The primary structure comprises 524 residues: 2-isopropylmalate synthase (524 aa).

The region spanning valine 15–threonine 277 is the Pyruvate carboxyltransferase domain. Residues aspartate 24, histidine 212, histidine 214, and asparagine 248 each coordinate Mn(2+). The segment at arginine 401–phenylalanine 524 is regulatory domain.

The protein belongs to the alpha-IPM synthase/homocitrate synthase family. LeuA type 1 subfamily. In terms of assembly, homodimer. The cofactor is Mn(2+).

It is found in the cytoplasm. The enzyme catalyses 3-methyl-2-oxobutanoate + acetyl-CoA + H2O = (2S)-2-isopropylmalate + CoA + H(+). It functions in the pathway amino-acid biosynthesis; L-leucine biosynthesis; L-leucine from 3-methyl-2-oxobutanoate: step 1/4. Functionally, catalyzes the condensation of the acetyl group of acetyl-CoA with 3-methyl-2-oxobutanoate (2-ketoisovalerate) to form 3-carboxy-3-hydroxy-4-methylpentanoate (2-isopropylmalate). In Caulobacter sp. (strain K31), this protein is 2-isopropylmalate synthase.